Here is a 616-residue protein sequence, read N- to C-terminus: Chaperone protein HscA (616 aa).

The protein belongs to the heat shock protein 70 family.

Functionally, chaperone involved in the maturation of iron-sulfur cluster-containing proteins. Has a low intrinsic ATPase activity which is markedly stimulated by HscB. Involved in the maturation of IscU. The protein is Chaperone protein HscA of Escherichia fergusonii (strain ATCC 35469 / DSM 13698 / CCUG 18766 / IAM 14443 / JCM 21226 / LMG 7866 / NBRC 102419 / NCTC 12128 / CDC 0568-73).